The sequence spans 203 residues: Guanylate kinase (203 aa).

The Guanylate kinase-like domain maps to 5–183 (GVLYIISAPS…AVEELKSVVV (179 aa)). Residue 12–19 (APSGAGKT) coordinates ATP.

Belongs to the guanylate kinase family.

It is found in the cytoplasm. The catalysed reaction is GMP + ATP = GDP + ADP. Essential for recycling GMP and indirectly, cGMP. This Geobacter metallireducens (strain ATCC 53774 / DSM 7210 / GS-15) protein is Guanylate kinase.